The primary structure comprises 312 residues: HPr kinase/phosphorylase (312 aa).

Active-site residues include His-141 and Lys-162. 156–163 (GDSGIGKS) serves as a coordination point for ATP. Residue Ser-163 participates in Mg(2+) binding. The active-site Proton acceptor; for phosphorylation activity. Proton donor; for dephosphorylation activity is the Asp-180. The tract at residues 204–213 (LEIRGVGIID) is important for the catalytic mechanism of both phosphorylation and dephosphorylation. Residue Glu-205 coordinates Mg(2+). Residue Arg-246 is part of the active site. An important for the catalytic mechanism of dephosphorylation region spans residues 267–272 (PVRVGR).

This sequence belongs to the HPrK/P family. As to quaternary structure, homohexamer. The cofactor is Mg(2+).

The enzyme catalyses [HPr protein]-L-serine + ATP = [HPr protein]-O-phospho-L-serine + ADP + H(+). It carries out the reaction [HPr protein]-O-phospho-L-serine + phosphate + H(+) = [HPr protein]-L-serine + diphosphate. Its function is as follows. Catalyzes the ATP- as well as the pyrophosphate-dependent phosphorylation of a specific serine residue in HPr, a phosphocarrier protein of the phosphoenolpyruvate-dependent sugar phosphotransferase system (PTS). HprK/P also catalyzes the pyrophosphate-producing, inorganic phosphate-dependent dephosphorylation (phosphorolysis) of seryl-phosphorylated HPr (P-Ser-HPr). The two antagonistic activities of HprK/P are regulated by several intracellular metabolites, which change their concentration in response to the absence or presence of rapidly metabolisable carbon sources (glucose, fructose, etc.) in the growth medium. Therefore, by controlling the phosphorylation state of HPr, HPrK/P is a sensor enzyme that plays a major role in the regulation of carbon metabolism and sugar transport: it mediates carbon catabolite repression (CCR), and regulates PTS-catalyzed carbohydrate uptake and inducer exclusion. The sequence is that of HPr kinase/phosphorylase from Pediococcus pentosaceus (strain ATCC 25745 / CCUG 21536 / LMG 10740 / 183-1w).